The primary structure comprises 266 residues: Thiazole synthase (266 aa).

The active-site Schiff-base intermediate with DXP is the Lys-110. Residues Gly-171, 197 to 198, and 219 to 220 each bind 1-deoxy-D-xylulose 5-phosphate; these read AG and AT.

It belongs to the ThiG family. Homotetramer. Forms heterodimers with either ThiH or ThiS.

It is found in the cytoplasm. It catalyses the reaction [ThiS sulfur-carrier protein]-C-terminal-Gly-aminoethanethioate + 2-iminoacetate + 1-deoxy-D-xylulose 5-phosphate = [ThiS sulfur-carrier protein]-C-terminal Gly-Gly + 2-[(2R,5Z)-2-carboxy-4-methylthiazol-5(2H)-ylidene]ethyl phosphate + 2 H2O + H(+). It functions in the pathway cofactor biosynthesis; thiamine diphosphate biosynthesis. In terms of biological role, catalyzes the rearrangement of 1-deoxy-D-xylulose 5-phosphate (DXP) to produce the thiazole phosphate moiety of thiamine. Sulfur is provided by the thiocarboxylate moiety of the carrier protein ThiS. In vitro, sulfur can be provided by H(2)S. This chain is Thiazole synthase, found in Thermobifida fusca (strain YX).